A 2998-amino-acid polypeptide reads, in one-letter code: Probable polyketide synthase 14 (2998 aa).

In terms of domain architecture, Ketosynthase family 3 (KS3) spans 19–456 (EDDIAIIGIG…GSNCCLILSE (438 aa)). Catalysis depends on for beta-ketoacyl synthase activity residues cysteine 189, histidine 331, and histidine 376. The segment at 657-690 (GIEASFIVGHSLGEIPAAYCSGMITLDTLCYLIY) is acyl/malonyl transferase. Residue serine 667 is the For acyl/malonyl transferase activity of the active site. The tract at residues 962–1084 (IDQLGFSLIE…GNFQLFTSGN (123 aa)) is N-terminal hotdog fold. One can recognise a PKS/mFAS DH domain in the interval 962 to 1249 (IDQLGFSLIE…CKSLTIIKDS (288 aa)). Histidine 996 functions as the Proton acceptor; for dehydratase activity in the catalytic mechanism. Positions 1101–1249 (NLTKLTKNEL…CKSLTIIKDS (149 aa)) are C-terminal hotdog fold. Residue aspartate 1159 is the Proton donor; for dehydratase activity of the active site. The helical transmembrane segment at 1979–1999 (SILIHSGSGGIGLSALNILKW) threads the bilayer. One can recognise a Carrier domain in the interval 2476–2553 (ENDTSIDSLF…SSIKLITNQL (78 aa)). The residue at position 2513 (serine 2513) is an O-(pantetheine 4'-phosphoryl)serine. The interval 2559-2578 (DGQQQQHRQNKKNNNIPENK) is disordered. Over residues 2561-2573 (QQQQHRQNKKNNN) the composition is skewed to low complexity. A helical membrane pass occupies residues 2621-2641 (IFLTGSTGFLGAYLLWYLIQM).

It depends on pantetheine 4'-phosphate as a cofactor.

It is found in the membrane. In terms of biological role, probable polyketide synthase. The sequence is that of Probable polyketide synthase 14 (pks14) from Dictyostelium discoideum (Social amoeba).